The primary structure comprises 346 residues: Angiopoietin-related protein 7 (346 aa).

The signal sequence occupies residues 1-26 (MLKKPLSAVTWLCIFIVAFVSHPAWL). A coiled-coil region spans residues 39-119 (QLKAANCCEE…DIMQLQAAQT (81 aa)). Residue Asn-58 is glycosylated (N-linked (GlcNAc...) asparagine). The Fibrinogen C-terminal domain occupies 122–343 (QTSADAIYDC…RVEMKIRPED (222 aa)). A disulfide bridge links Cys-131 with Cys-162. 2 N-linked (GlcNAc...) asparagine glycosylation sites follow: Asn-253 and Asn-267. The cysteines at positions 285 and 298 are disulfide-linked.

In terms of assembly, homotetramer; disulfide-linked. In terms of tissue distribution, highly expressed in the cornea (at protein level). Expression is restricted to the stromal layer. Also detected at the junction between the corneal stromal layer and the conjuctiva. Not detected in the sclera.

It is found in the secreted. In terms of biological role, has a role in the formation and organization of the extracellular matrix. In the eye, it functions as a mediator of dexamethasone-induced matrix deposition in the trabecular meshwork, the tissue responsible for the outflow of the ocular aqueous humor and for the maintenance of intraocular pressure. Is a negative regulator of angiogenesis in the cornea, and plays a major role in maintaining corneal avascularity and transparency. The sequence is that of Angiopoietin-related protein 7 (ANGPTL7) from Homo sapiens (Human).